Consider the following 300-residue polypeptide: Actin-related protein 2/3 complex subunit 2-A (300 aa).

This sequence belongs to the ARPC2 family. Component of the Arp2/3 complex composed of actr2/arp2, actr3/arp3, arpc1 (arpc1a or arpc1b), arpc2, arpc3, arpc4 and arpc5.

The protein resides in the cytoplasm. Its subcellular location is the cytoskeleton. The protein localises to the cell projection. It localises to the nucleus. Actin-binding component of the Arp2/3 complex, a multiprotein complex that mediates actin polymerization upon stimulation by nucleation-promoting factor (NPF). The Arp2/3 complex mediates the formation of branched actin networks in the cytoplasm, providing the force for cell motility. In addition to its role in the cytoplasmic cytoskeleton, the Arp2/3 complex also promotes actin polymerization in the nucleus, thereby regulating gene transcription and repair of damaged DNA. The Arp2/3 complex promotes homologous recombination (HR) repair in response to DNA damage by promoting nuclear actin polymerization, leading to drive motility of double-strand breaks (DSBs). This is Actin-related protein 2/3 complex subunit 2-A (arpc2-a) from Xenopus laevis (African clawed frog).